The sequence spans 310 residues: Low-salt glycan biosynthesis protein Agl12 (310 aa).

NAD(+)-binding positions include 7 to 13 (GGAGFIG), 32 to 35 (DALT), and 58 to 59 (DI). S82 provides a ligand contact to substrate. T97 is a binding site for NAD(+). Residues T122 and 122-124 (TDE) contribute to the substrate site. D123 acts as the Proton donor in catalysis. Active-site proton acceptor residues include E124 and Y146. Position 146–150 (146–150 (YSATK)) interacts with NAD(+). N175 is a substrate binding site. N176 contributes to the NAD(+) binding site. Residues 185–186 (KL), 201–203 (PVY), R210, N245, and 269–272 (RAGH) each bind substrate.

This sequence belongs to the NAD(P)-dependent epimerase/dehydratase family. dTDP-glucose dehydratase subfamily. The cofactor is NAD(+).

It functions in the pathway protein modification; protein glycosylation. Its pathway is cell surface structure biogenesis; S-layer biogenesis. Functionally, lyase involved in N-glycan biosynthetic pathway that takes place under low-salt conditions (1.75 M instead of 3.4 M). Participates in the formation of the tetrasaccharide present at 'Asn-532' of S-layer glycoprotein Csg, consisting of a sulfated hexose, 2 hexoses and rhamnose. Involved in the addition of final rhamnose (sugar 4) of the tetrasaccharide on the dolichol phosphate carrier. The chain is Low-salt glycan biosynthesis protein Agl12 (agl12) from Haloferax volcanii (strain ATCC 29605 / DSM 3757 / JCM 8879 / NBRC 14742 / NCIMB 2012 / VKM B-1768 / DS2) (Halobacterium volcanii).